Consider the following 110-residue polypeptide: U1-lycotoxin-Ls1ee (110 aa).

A signal peptide spans 1–20; sequence MKFVLLFGVLLVTLFSYSSA. Residues 21 to 44 constitute a propeptide that is removed on maturation; it reads EMLDDFDQADEDELLSLIEKEEAR. 4 cysteine pairs are disulfide-bonded: Cys-47–Cys-62, Cys-54–Cys-71, Cys-61–Cys-89, and Cys-73–Cys-87.

It belongs to the neurotoxin 19 (CSTX) family. 03 subfamily. As to expression, expressed by the venom gland.

Its subcellular location is the secreted. This is U1-lycotoxin-Ls1ee from Lycosa singoriensis (Wolf spider).